Here is a 1363-residue protein sequence, read N- to C-terminus: Vascular endothelial growth factor receptor 3 (1363 aa).

The signal sequence occupies residues 1-24 (MQPGAALNLRLWLCLGLLQGLANG). The Extracellular portion of the chain corresponds to 25 to 775 (YSMTPPTLNI…EGSEDKGSME (751 aa)). Residues Asn-33, Asn-104, Asn-166, Asn-251, Asn-299, and Asn-411 are each glycosylated (N-linked (GlcNAc...) asparagine). 7 consecutive Ig-like C2-type domains span residues 44–118 (GDSL…YIKA), 151–213 (KDSM…WGDQ), 230–326 (YDIQ…TEVI), 331–415 (PFIS…ISLE), 422–552 (PHIH…FYVT), 555–671 (PDGF…KYLS), and 678–764 (PRLT…ASVA). 2 disulfide bridges follow: Cys-51–Cys-111 and Cys-158–Cys-206. Residues Cys-252 and Cys-310 are joined by a disulfide bond. Cystine bridges form between Cys-445-Cys-534, Cys-466-Cys-486, and Cys-578-Cys-653. N-linked (GlcNAc...) asparagine glycosylation is found at Asn-515, Asn-527, Asn-582, Asn-594, Asn-683, and Asn-690. Cys-699 and Cys-751 are disulfide-bonded. N-linked (GlcNAc...) asparagine glycosylation is present at Asn-758. Residues 776 to 796 (IVILIGTGVIAVFFWVLLLLI) form a helical membrane-spanning segment. At 797–1363 (FCNMKRPAHA…GSTFFADSSY (567 aa)) the chain is on the cytoplasmic side. A phosphotyrosine; by SRC mark is found at Tyr-830 and Tyr-833. The 329-residue stretch at 845–1173 (LHLGRVLGHG…DLVEILGDLL (329 aa)) folds into the Protein kinase domain. ATP-binding positions include 851–859 (LGHGAFGKV) and Lys-879. Asp-1037 serves as the catalytic Proton acceptor. Tyr-1063 is subject to Phosphotyrosine; by autocatalysis and SRC. A phosphotyrosine; by autocatalysis mark is found at Tyr-1068, Tyr-1230, Tyr-1231, and Tyr-1265. Residues 1288–1330 (ESRHRPEGSFSCKGPGQHMDIPRGHPDPQGRRRRPTQGAQGGK) are disordered. The segment covering 1307–1317 (DIPRGHPDPQG) has biased composition (basic and acidic residues). 2 positions are modified to phosphotyrosine; by autocatalysis and SRC: Tyr-1333 and Tyr-1337. Tyr-1363 carries the phosphotyrosine; by autocatalysis modification.

This sequence belongs to the protein kinase superfamily. Tyr protein kinase family. CSF-1/PDGF receptor subfamily. In terms of assembly, interacts with VEGFC and VEGFD. Monomer in the absence of bound VEGFC or VEGFD. Homodimer in the presence of bound VEGFC or VEGFD. Can also form a heterodimer with KDR. Interacts with PTPN14; the interaction is enhanced by stimulation with VEGFC. Interacts with CRK, GRB2, PTK2/FAK1, SHC1, PIK3R1 and PTPN11/SHP-2. Identified in a complex with SRC and ITGB1. Post-translationally, autophosphorylated on tyrosine residues upon ligand binding. Autophosphorylation occurs in trans, i.e. one subunit of the dimeric receptor phosphorylates tyrosine residues on the other subunit. Phosphorylation in response to H(2)O(2) is mediated by a process that requires SRC and PRKCD activity. Phosphorylation at Tyr-1068 is required for autophosphorylation at additional tyrosine residues. Phosphorylation at Tyr-1063 and Tyr-1337 is important for interaction with CRK and subsequent activation of MAPK8. Phosphorylation at Tyr-1230, Tyr-1231 and Tyr-1337 is important for interaction with GRB2 and subsequent activation of the AKT1 and MAPK1/ERK2 and/or MAPK3/ERK1 signaling pathways. In response to endothelial cell adhesion onto collagen, can also be phosphorylated in the absence of FLT4 kinase activity by SRC. As to expression, expressed in adult lung and liver, and in fetal liver, brain, intestine and placenta.

It localises to the cell membrane. The protein localises to the cytoplasm. It is found in the nucleus. It catalyses the reaction L-tyrosyl-[protein] + ATP = O-phospho-L-tyrosyl-[protein] + ADP + H(+). Its activity is regulated as follows. Present in an inactive conformation in the absence of bound ligand. Binding of VEGFC or VEGFD leads to dimerization and activation by autophosphorylation on tyrosine residues. Its function is as follows. Tyrosine-protein kinase that acts as a cell-surface receptor for VEGFC and VEGFD, and plays an essential role in adult lymphangiogenesis and in the development of the vascular network and the cardiovascular system during embryonic development. Promotes proliferation, survival and migration of endothelial cells, and regulates angiogenic sprouting. Signaling by activated FLT4 leads to enhanced production of VEGFC, and to a lesser degree VEGFA, thereby creating a positive feedback loop that enhances FLT4 signaling. Modulates KDR signaling by forming heterodimers. Mediates activation of the MAPK1/ERK2, MAPK3/ERK1 signaling pathway, of MAPK8 and the JUN signaling pathway, and of the AKT1 signaling pathway. Phosphorylates SHC1. Mediates phosphorylation of PIK3R1, the regulatory subunit of phosphatidylinositol 3-kinase. Promotes phosphorylation of MAPK8 at 'Thr-183' and 'Tyr-185', and of AKT1 at 'Ser-473'. The protein is Vascular endothelial growth factor receptor 3 (Flt4) of Mus musculus (Mouse).